The sequence spans 279 residues: Tetra-spanning protein 1 (279 aa).

The next 2 helical transmembrane spans lie at 25–45 (VWFSGQVIVLISSVLYALQAI) and 50–70 (APPFLFKSAAFGAIVAYAIVL). Asn77 is a glycosylation site (N-linked (GlcNAc...) asparagine). Residues 100-122 (YFILALSMLIDRPILFSLAPYAI) form a helical membrane-spanning segment. An N-linked (GlcNAc...) asparagine glycan is attached at Asn143. The chain crosses the membrane as a helical span at residues 172–192 (MQLVASLETFLLFRLFFGVFL). Positions 260–279 (VGTAQSRPTASSSTTAPSST) are disordered. Residues 262 to 279 (TAQSRPTASSSTTAPSST) are compositionally biased toward low complexity.

The protein belongs to the PER33/POM33 family. As to quaternary structure, interacts with RTN1 and YOP1.

It is found in the golgi apparatus membrane. Its subcellular location is the endoplasmic reticulum membrane. It localises to the nucleus membrane. Functionally, required for the correct positioning of the cellular division plane by delimiting the actomyosin ring assembly at the cell equator. The polypeptide is Tetra-spanning protein 1 (tts1) (Schizosaccharomyces pombe (strain 972 / ATCC 24843) (Fission yeast)).